The chain runs to 274 residues: Undecaprenyl-diphosphatase 1 (274 aa).

7 helical membrane passes run 8–28, 45–65, 92–112, 120–140, 195–215, 230–250, and 253–273; these read WLLIKYLLLGLFQGFTEPIPV, IEGLSFEVMVNFASLFAVIAI, FRISFYLLLATVPAVLAALLF, LKQLHVIAFALLITGMALWLI, FSFFLYIPISLGSGVLAISDI, IAFIGSFIASYVSLLWFMNIM, and GKLIYFALYCWLAGLIVLSLL.

The protein belongs to the UppP family.

Its subcellular location is the cell membrane. The catalysed reaction is di-trans,octa-cis-undecaprenyl diphosphate + H2O = di-trans,octa-cis-undecaprenyl phosphate + phosphate + H(+). Its function is as follows. Catalyzes the dephosphorylation of undecaprenyl diphosphate (UPP). Confers resistance to bacitracin. The protein is Undecaprenyl-diphosphatase 1 of Halalkalibacterium halodurans (strain ATCC BAA-125 / DSM 18197 / FERM 7344 / JCM 9153 / C-125) (Bacillus halodurans).